A 203-amino-acid polypeptide reads, in one-letter code: Outer-membrane lipoprotein LolB (203 aa).

The first 21 residues, Met1 to Gly21, serve as a signal peptide directing secretion. A lipid anchor (N-palmitoyl cysteine) is attached at Cys22. Cys22 carries S-diacylglycerol cysteine lipidation.

It belongs to the LolB family. Monomer.

The protein localises to the cell outer membrane. Its function is as follows. Plays a critical role in the incorporation of lipoproteins in the outer membrane after they are released by the LolA protein. The chain is Outer-membrane lipoprotein LolB from Halorhodospira halophila (strain DSM 244 / SL1) (Ectothiorhodospira halophila (strain DSM 244 / SL1)).